The primary structure comprises 726 residues: Netrin-A (726 aa).

A signal peptide spans 1–29; it reads MIRGILLLLLGTTRFSPIQCISNDVYFKM. A Laminin N-terminal domain is found at 46-312; sequence EPRACIPDFV…AISDFSVGGR (267 aa). 3 N-linked (GlcNAc...) asparagine glycosylation sites follow: Asn-108, Asn-112, and Asn-127. 12 cysteine pairs are disulfide-bonded: Cys-313/Cys-322, Cys-315/Cys-332, Cys-334/Cys-343, Cys-346/Cys-366, Cys-369/Cys-378, Cys-371/Cys-396, Cys-399/Cys-408, Cys-411/Cys-429, Cys-432/Cys-444, Cys-434/Cys-451, Cys-453/Cys-462, and Cys-465/Cys-479. Laminin EGF-like domains are found at residues 313-368, 369-431, and 432-481; these read CKCN…ECKE, CNCN…VCKA, and CDCH…PCIK. A glycan (N-linked (GlcNAc...) asparagine) is linked at Asn-445. A disordered region spans residues 490-516; the sequence is LDTQNTAPEPDEPESSPGSGGDRNGAA. 2 cysteine pairs are disulfide-bonded: Cys-533–Cys-671 and Cys-549–Cys-725. An NTR domain is found at 533-725; sequence CGKCRVSTKR…KRFQRRARTC (193 aa). 2 N-linked (GlcNAc...) asparagine glycosylation sites follow: Asn-652 and Asn-679.

In terms of tissue distribution, at the midline of developing CNS at the time of commissure formation and in different subsets of neurons, muscles, and epidermal patches.

The protein localises to the secreted. It localises to the extracellular space. It is found in the extracellular matrix. Its function is as follows. Netrins control guidance of CNS commissural axons at the midline and peripheral motor axons to their target muscles. This chain is Netrin-A (NetA), found in Drosophila melanogaster (Fruit fly).